The following is a 507-amino-acid chain: Maturase K (507 aa).

Belongs to the intron maturase 2 family. MatK subfamily.

The protein resides in the plastid. It is found in the chloroplast. Its function is as follows. Usually encoded in the trnK tRNA gene intron. Probably assists in splicing its own and other chloroplast group II introns. In Magnolia figo (Banana shrub), this protein is Maturase K.